Here is a 59-residue protein sequence, read N- to C-terminus: Large ribosomal subunit protein uL30 (59 aa).

It belongs to the universal ribosomal protein uL30 family. Part of the 50S ribosomal subunit.

The polypeptide is Large ribosomal subunit protein uL30 (Psychrobacter arcticus (strain DSM 17307 / VKM B-2377 / 273-4)).